The sequence spans 1067 residues: Sal-like protein 4 (1067 aa).

The disordered stretch occupies residues 1-62 (MSRRKQAKPQ…SEDSIPVKRP (62 aa)). A compositionally biased stretch (low complexity) spans 15–42 (EEGQGEQPQQLPSPDLAEALAAEEPGAP). Serine 53 bears the Phosphoserine mark. Residues 68–90 (HICNKCCAEFFSLSEFMEHKKSC) form a C2H2-type 1; atypical zinc finger. The interval 115-140 (ALSHQLGSPSNKDSLQENGSSSGDLK) is disordered. Over residues 119-137 (QLGSPSNKDSLQENGSSSG) the composition is skewed to polar residues. Lysine 151 is covalently cross-linked (Glycyl lysine isopeptide (Lys-Gly) (interchain with G-Cter in SUMO1); alternate). Lysine 151 is covalently cross-linked (Glycyl lysine isopeptide (Lys-Gly) (interchain with G-Cter in SUMO2); alternate). Residues lysine 170, lysine 185, and lysine 291 each participate in a glycyl lysine isopeptide (Lys-Gly) (interchain with G-Cter in SUMO2) cross-link. At serine 308 the chain carries Phosphoserine. Residue lysine 317 forms a Glycyl lysine isopeptide (Lys-Gly) (interchain with G-Cter in SUMO1); alternate linkage. Lysine 317 participates in a covalent cross-link: Glycyl lysine isopeptide (Lys-Gly) (interchain with G-Cter in SUMO2); alternate. Lysine 377 is covalently cross-linked (Glycyl lysine isopeptide (Lys-Gly) (interchain with G-Cter in SUMO2)). Lysine 379 is covalently cross-linked (Glycyl lysine isopeptide (Lys-Gly) (interchain with G-Cter in SUMO1); alternate). Lysine 379 participates in a covalent cross-link: Glycyl lysine isopeptide (Lys-Gly) (interchain with G-Cter in SUMO2); alternate. C2H2-type zinc fingers lie at residues 387 to 409 (HKCR…LRSH) and 415 to 437 (YVCP…LQRH). Lysine 441 is covalently cross-linked (Glycyl lysine isopeptide (Lys-Gly) (interchain with G-Cter in SUMO2)). The interval 471–521 (DESSLSVDAEPVPVTGTPSLGLPQKLTSGPNSRDLMGGSLPNDMQPGPSPE) is disordered. Lysine 557 is covalently cross-linked (Glycyl lysine isopeptide (Lys-Gly) (interchain with G-Cter in SUMO2)). 2 C2H2-type zinc fingers span residues 573 to 595 (NECL…YRTH) and 601 to 623 (FQCK…LGVH). Glycyl lysine isopeptide (Lys-Gly) (interchain with G-Cter in SUMO2) cross-links involve residues lysine 604 and lysine 630. The C2H2-type 6 zinc-finger motif lies at 633 to 655 (HSCPICQKKFTNAVMLQQHIRMH). 2 disordered regions span residues 682 to 716 (ENGS…STVS) and 752 to 835 (RQSS…SLPP). The segment covering 693–704 (DAAEGMEAEEVC) has biased composition (acidic residues). Polar residues-rich tracts occupy residues 707–716 (DVPSGPSTVS) and 752–761 (RQSSRENSSL). Phosphoserine occurs at positions 785 and 798. Over residues 798–809 (SPANSQAGSVKS) the composition is skewed to polar residues. Residues 810 to 829 (RSPEGHKAEGVESCRVDTEG) show a composition bias toward basic and acidic residues. Residue lysine 846 forms a Glycyl lysine isopeptide (Lys-Gly) (interchain with G-Cter in SUMO1); alternate linkage. Lysine 846 participates in a covalent cross-link: Glycyl lysine isopeptide (Lys-Gly) (interchain with G-Cter in SUMO2); alternate. The segment at 880-902 (HCCTRCGKNFSSASALQIHERTH) adopts a C2H2-type 7 zinc-finger fold. Lysine 906 is covalently cross-linked (Glycyl lysine isopeptide (Lys-Gly) (interchain with G-Cter in SUMO2)). The C2H2-type 8 zinc-finger motif lies at 908–930 (FVCNICGRAFTTKGNLKVHYMTH). Glycyl lysine isopeptide (Lys-Gly) (interchain with G-Cter in SUMO2) cross-links involve residues lysine 942 and lysine 957. The residue at position 1029 (serine 1029) is a Phosphoserine.

This sequence belongs to the sal C2H2-type zinc-finger protein family. As to quaternary structure, interacts with POU5F1/OCT4. Interacts with NANOG. Interacts with BEND3. Interacts with NSD2 (via PHD-type zinc fingers 1, 2 and 3). Interacts with NRBP1. In terms of processing, sumoylation with both SUMO1 and SUMO2 regulates the stability, subcellular localization, transcriptional activity, and may reduce interaction with POU5F1/OCT4.

Its subcellular location is the cytoplasm. It is found in the nucleus. In terms of biological role, transcription factor with a key role in the maintenance and self-renewal of embryonic and hematopoietic stem cells. The chain is Sal-like protein 4 (Sall4) from Mus musculus (Mouse).